An 80-amino-acid chain; its full sequence is Omega-conotoxin-like 1 (80 aa).

An N-terminal signal peptide occupies residues methionine 1–threonine 22. Positions aspartate 23 to serine 49 are excised as a propeptide. Cystine bridges form between cysteine 52-cysteine 66, cysteine 59-cysteine 70, and cysteine 65-cysteine 79.

This sequence belongs to the conotoxin O1 superfamily. Peptide predicted to begin at Arg-51, but it seems more probable that it begins at Cys-52, since this position corresponds to a dibasic residue cleavage. In terms of tissue distribution, expressed by the venom duct.

The protein localises to the secreted. Its function is as follows. Omega-conotoxins act at presynaptic membranes, they bind and block voltage-gated calcium channels (Cav). The sequence is that of Omega-conotoxin-like 1 from Conus capitaneus (Captain cone).